A 415-amino-acid polypeptide reads, in one-letter code: Meiotic driver wtf36 (415 aa).

Disordered regions lie at residues 1–49 and 67–99; these read MKNK…DLNN and TTPP…SGTA. Positions 11–29 are enriched in basic and acidic residues; the sequence is SMDEMSAKNDNEIDLEKGP. The next 7 helical transmembrane spans lie at 105-125, 142-162, 169-189, 205-225, 240-260, 274-294, and 298-318; these read FLIK…PAVC, WTLF…LTYF, AVKV…IFLA, VTAI…AQCV, VVII…RSKF, CSIS…FWTL, and FSGL…TKGL.

It belongs to the WTF family. As to quaternary structure, homomer. Forms protein aggregates. The two isoforms can interact with each other and with themselves. High sequence similarity is required for their interaction.

The protein localises to the spore membrane. It localises to the vacuole membrane. The protein resides in the ascus epiplasm. It is found in the cytoplasm. Its subcellular location is the endoplasmic reticulum membrane. Promotes unequal transmission of alleles from the parental zygote to progeny spores by acting as poison/antidote system where the poison and antidote proteins are produced from the same locus; the poison component is trans-acting and targets all spores within an ascus whereas the antidote component is spore-specific, leading to poisoning of all progeny that do not inherit the allele. Functionally, localizes isoform 2 to the vacuole thereby facilitating its degradation. In terms of biological role, forms toxic aggregates that disrupt spore maturation. This Schizosaccharomyces pombe (Fission yeast) protein is Meiotic driver wtf36.